A 349-amino-acid polypeptide reads, in one-letter code: MKISRETLHQLIENKLCQAGLKREHAATVAEVLVYADARGIHSHGAVRVEYYAERISKGGTNREPEFRLEETGPCSAILHADNAAGQVAAKMGMEHAIKTAQQNGVAVVGISRMGHSGAISYFVQQAARAGFIGISMCQSDPMVVPFGGAEIYYGTNPLAFAAPGEGDEILTFDMATTVQAWGKVLDARSRNMSIPDTWAVDKNGVPTTDPFAVHALLPAAGPKGYGLMMMIDVLSGVLLGLPFGRQVSSMYDDLHAGRNLGQLHIVINPNFFSSSELFRQHLSQTMRELNAITPAPGFNQVYYPGQDQDIKQRKAAVEGIEIVDDIYQYLISDALYNTSYETKNPFAQ.

H116 functions as the Proton acceptor in the catalytic mechanism. NAD(+)-binding positions include S140, D174–A176, K224, and G306–D308.

This sequence belongs to the LDH2/MDH2 oxidoreductase family. In terms of assembly, homodimer.

It localises to the cytoplasm. The enzyme catalyses (S)-ureidoglycolate + NAD(+) = N-carbamoyl-2-oxoglycine + NADH + H(+). It functions in the pathway nitrogen metabolism; (S)-allantoin degradation; oxalurate from (S)-ureidoglycolate: step 1/1. Functionally, allD plays a pivotal role as a metabolic branch-point enzyme in nitrogen utilization via the assimilation of allantoin. It is able to utilize allantoin as a sole source of nitrogen under anaerobic conditions. Catalyzes the oxidation of ureidoglycolate to oxalurate. The protein is Ureidoglycolate dehydrogenase (NAD(+)) of Escherichia coli (strain K12).